Reading from the N-terminus, the 735-residue chain is Disintegrin and metalloproteinase domain-containing protein 2 (735 aa).

Residues 1–18 form the signal peptide; sequence MWLILLLLSGLSELGGLS. A propeptide spanning residues 19-180 is cleaved from the precursor; the sequence is QSQTEGTREK…YKIRSIKPQR (162 aa). Over 19–686 the chain is Extracellular; sequence QSQTEGTREK…ASAYRSKSPR (668 aa). N-linked (GlcNAc...) asparagine glycans are attached at residues asparagine 128, asparagine 226, and asparagine 279. In terms of domain architecture, Peptidase M12B spans 184 to 381; it reads HYLEIHIVVE…QSSHCLQNQP (198 aa). Intrachain disulfides connect cysteine 293/cysteine 376, cysteine 335/cysteine 360, cysteine 337/cysteine 342, and cysteine 449/cysteine 469. Residues asparagine 359, asparagine 463, asparagine 489, asparagine 569, and asparagine 585 are each glycosylated (N-linked (GlcNAc...) asparagine). The Disintegrin domain occupies 389 to 476; the sequence is MAVCGNGEVE…EVCEDFFVQN (88 aa). The region spanning 615 to 648 is the EGF-like domain; sequence LGYDCNLEKCNHHGVCNNKKNCHCDPTYLPPDCK. Intrachain disulfides connect cysteine 619/cysteine 630, cysteine 624/cysteine 636, and cysteine 638/cysteine 647. Residues 687-707 traverse the membrane as a helical segment; it reads WPFFLIIPFYVVILVLIGMLV. Over 708–735 the chain is Cytoplasmic; the sequence is KVYSQRMKWRMDDFSSEEQFESESESKD. A Phosphoserine modification is found at serine 729.

In terms of assembly, heterodimer with ADAM1/fertilin subunit alpha. In terms of processing, the signal and the metalloprotease domain are cleaved during the epididymal maturation of the spermatozoa. Expressed in the testis and testicular sperm (at protein level).

Its subcellular location is the membrane. Functionally, sperm surface membrane protein that may be involved in sperm-egg plasma membrane adhesion and fusion during fertilization. Could have a direct role in sperm-zona binding or migration of sperm from the uterus into the oviduct. Interactions with egg membrane could be mediated via binding between its disintegrin-like domain to one or more integrins receptors on the egg. This is a non catalytic metalloprotease-like protein. The polypeptide is Disintegrin and metalloproteinase domain-containing protein 2 (Mus musculus (Mouse)).